The chain runs to 136 residues: DNA-directed RNA polymerase subunit omega (136 aa).

The segment at 81 to 136 (EAEAVPLLSSSPAAAAVAPQSSGDDGDIQFDRMSEEDLLRGLENLAPPTETEDEGD) is disordered. Low complexity predominate over residues 83 to 99 (EAVPLLSSSPAAAAVAP). The span at 109–120 (QFDRMSEEDLLR) shows a compositional bias: basic and acidic residues.

It belongs to the RNA polymerase subunit omega family. In terms of assembly, the RNAP catalytic core consists of 2 alpha, 1 beta, 1 beta' and 1 omega subunit. When a sigma factor is associated with the core the holoenzyme is formed, which can initiate transcription.

The catalysed reaction is RNA(n) + a ribonucleoside 5'-triphosphate = RNA(n+1) + diphosphate. Promotes RNA polymerase assembly. Latches the N- and C-terminal regions of the beta' subunit thereby facilitating its interaction with the beta and alpha subunits. This Methylobacterium nodulans (strain LMG 21967 / CNCM I-2342 / ORS 2060) protein is DNA-directed RNA polymerase subunit omega.